We begin with the raw amino-acid sequence, 565 residues long: Mitochondrial distribution and morphology protein 34 (565 aa).

Positions 1 to 195 constitute an SMP-LTD domain; the sequence is MAFNFNWSPL…LPAIIHRLSL (195 aa). Disordered regions lie at residues 207-236, 296-317, and 348-504; these read EDQD…VDAL, PSDQ…LSRT, and STYG…RQLP. Positions 358-370 are enriched in basic residues; sequence RHSKAHARKRKKR. Residues 371–381 show a composition bias toward basic and acidic residues; that stretch reads VVDLRRPKQPE. The span at 382-401 shows a compositional bias: polar residues; sequence SETASVTDESSFTETTSAPS. Basic and acidic residues-rich tracts occupy residues 446-472 and 483-496; these read LRRD…HAEV and IRHE…EKQE.

The protein belongs to the MDM34 family. As to quaternary structure, component of the ER-mitochondria encounter structure (ERMES) or MDM complex, composed of mmm1, mdm10, mdm12 and mdm34.

It localises to the mitochondrion outer membrane. Component of the ERMES/MDM complex, which serves as a molecular tether to connect the endoplasmic reticulum (ER) and mitochondria. Components of this complex are involved in the control of mitochondrial shape and protein biogenesis, and function in nonvesicular lipid trafficking between the ER and mitochondria. Mdm34 is required for the interaction of the ER-resident membrane protein mmm1 and the outer mitochondrial membrane-resident beta-barrel protein mdm10. The polypeptide is Mitochondrial distribution and morphology protein 34 (Aspergillus terreus (strain NIH 2624 / FGSC A1156)).